We begin with the raw amino-acid sequence, 692 residues long: Elongation factor G (692 aa).

The tr-type G domain maps to 8 to 282; sequence ENTRNIGIMA…AVIDYLPSPV (275 aa). Residues 17–24, 81–85, and 135–138 each bind GTP; these read AHIDAGKT, DTPGH, and NKMD.

This sequence belongs to the TRAFAC class translation factor GTPase superfamily. Classic translation factor GTPase family. EF-G/EF-2 subfamily.

Its subcellular location is the cytoplasm. Functionally, catalyzes the GTP-dependent ribosomal translocation step during translation elongation. During this step, the ribosome changes from the pre-translocational (PRE) to the post-translocational (POST) state as the newly formed A-site-bound peptidyl-tRNA and P-site-bound deacylated tRNA move to the P and E sites, respectively. Catalyzes the coordinated movement of the two tRNA molecules, the mRNA and conformational changes in the ribosome. The polypeptide is Elongation factor G (Lysinibacillus sphaericus (strain C3-41)).